A 795-amino-acid polypeptide reads, in one-letter code: Glutamine--tRNA ligase, cytoplasmic (795 aa).

A disordered region spans residues 188-220 (ADNEKPTKKKEKKEKPAKVEEKKAVVETTAEPS). Positions 200–212 (KEKPAKVEEKKAV) are enriched in basic and acidic residues. A 'HIGH' region motif is present at residues 277–287 (PEPNGYLHIGH). ATP contacts are provided by residues 278–280 (EPN) and 284–290 (HIGHAKA). L-glutamine contacts are provided by aspartate 310 and tyrosine 450. Residues threonine 469, 498–499 (RL), and 506–508 (MSK) each bind ATP. A 'KMSKS' region motif is present at residues 505 to 509 (VMSKR).

The protein belongs to the class-I aminoacyl-tRNA synthetase family.

The protein localises to the cytoplasm. It localises to the cytosol. The enzyme catalyses tRNA(Gln) + L-glutamine + ATP = L-glutaminyl-tRNA(Gln) + AMP + diphosphate. This Arabidopsis thaliana (Mouse-ear cress) protein is Glutamine--tRNA ligase, cytoplasmic.